The sequence spans 389 residues: Glutamate 5-kinase (389 aa).

K16 lines the ATP pocket. 3 residues coordinate substrate: S56, D143, and N155. 175 to 176 provides a ligand contact to ATP; it reads SD. The 78-residue stretch at 281 to 358 folds into the PUA domain; that stretch reads AGGLHVDDGA…AEIEAILGYP (78 aa).

The protein belongs to the glutamate 5-kinase family.

It is found in the cytoplasm. It carries out the reaction L-glutamate + ATP = L-glutamyl 5-phosphate + ADP. Its pathway is amino-acid biosynthesis; L-proline biosynthesis; L-glutamate 5-semialdehyde from L-glutamate: step 1/2. Catalyzes the transfer of a phosphate group to glutamate to form L-glutamate 5-phosphate. This Rhizobium leguminosarum bv. trifolii (strain WSM2304) protein is Glutamate 5-kinase.